A 536-amino-acid polypeptide reads, in one-letter code: Chaperonin GroEL (536 aa).

ATP contacts are provided by residues 29–32 (TLGP), 86–90 (DGTTT), Gly-413, 476–478 (DAA), and Asp-492.

This sequence belongs to the chaperonin (HSP60) family. As to quaternary structure, forms a cylinder of 14 subunits composed of two heptameric rings stacked back-to-back. Interacts with the co-chaperonin GroES.

The protein resides in the cytoplasm. It carries out the reaction ATP + H2O + a folded polypeptide = ADP + phosphate + an unfolded polypeptide.. Together with its co-chaperonin GroES, plays an essential role in assisting protein folding. The GroEL-GroES system forms a nano-cage that allows encapsulation of the non-native substrate proteins and provides a physical environment optimized to promote and accelerate protein folding. The chain is Chaperonin GroEL from Methanococcus vannielii (strain ATCC 35089 / DSM 1224 / JCM 13029 / OCM 148 / SB).